The sequence spans 203 residues: dCTP deaminase (203 aa).

DCTP-binding positions include 105–110 (RSSLGR), Asp-123, 131–133 (TLE), Gln-152, Tyr-166, Lys-173, and Gln-177. The active-site Proton donor/acceptor is Glu-133. Positions 164–203 (RPYGVERGSKYQDQDGPQASRIGSDPEFHSDENQAAEHES) are disordered. Residues 166–176 (YGVERGSKYQD) are compositionally biased toward basic and acidic residues. Positions 187–203 (SDPEFHSDENQAAEHES) are enriched in basic and acidic residues.

It belongs to the dCTP deaminase family. As to quaternary structure, homotrimer.

It carries out the reaction dCTP + H2O + H(+) = dUTP + NH4(+). It participates in pyrimidine metabolism; dUMP biosynthesis; dUMP from dCTP (dUTP route): step 1/2. In terms of biological role, catalyzes the deamination of dCTP to dUTP. In Halorubrum lacusprofundi (strain ATCC 49239 / DSM 5036 / JCM 8891 / ACAM 34), this protein is dCTP deaminase.